The following is a 126-amino-acid chain: Fluoride-specific ion channel FluC (126 aa).

The next 4 helical transmembrane spans lie at 4–24 (LLLV…TSAW), 36–56 (GTLL…TASL), 67–85 (LFLA…SFNY), and 101–121 (AYLL…TLLV). Residues G75 and T78 each coordinate Na(+).

It belongs to the fluoride channel Fluc/FEX (TC 1.A.43) family.

The protein resides in the cell inner membrane. It catalyses the reaction fluoride(in) = fluoride(out). With respect to regulation, na(+) is not transported, but it plays an essential structural role and its presence is essential for fluoride channel function. Fluoride-specific ion channel. Important for reducing fluoride concentration in the cell, thus reducing its toxicity. The sequence is that of Fluoride-specific ion channel FluC from Anaeromyxobacter dehalogenans (strain 2CP-1 / ATCC BAA-258).